Consider the following 217-residue polypeptide: Large ribosomal subunit protein uL3 (217 aa).

Residue Gln-154 is modified to N5-methylglutamine.

It belongs to the universal ribosomal protein uL3 family. In terms of assembly, part of the 50S ribosomal subunit. Forms a cluster with proteins L14 and L19. Post-translationally, methylated by PrmB.

Its function is as follows. One of the primary rRNA binding proteins, it binds directly near the 3'-end of the 23S rRNA, where it nucleates assembly of the 50S subunit. The sequence is that of Large ribosomal subunit protein uL3 from Burkholderia ambifaria (strain ATCC BAA-244 / DSM 16087 / CCUG 44356 / LMG 19182 / AMMD) (Burkholderia cepacia (strain AMMD)).